We begin with the raw amino-acid sequence, 1066 residues long: Phosphatidylinositol 4-kinase PIK1 (1066 aa).

In terms of domain architecture, PIK helical spans 1-133; it reads MHKASSSKKS…GFQVARRVLN (133 aa). 2 positions are modified to phosphoserine: Ser-10 and Ser-236. 3 disordered regions span residues 218–240, 303–411, and 564–624; these read KKTS…PIDL, DGKN…KKAN, and NENR…LGDM. Residues 342-356 are compositionally biased toward acidic residues; the sequence is NNEDETGGETEEDAD. Composition is skewed to polar residues over residues 374-411 and 570-597; these read QPRT…KKAN and STLT…NEGL. Phosphoserine is present on Ser-384. Thr-394 is modified (phosphothreonine). Ser-396 and Ser-592 each carry phosphoserine. Residues 598 to 609 show a composition bias toward low complexity; it reads SSTSRSDSASTA. One can recognise a PI3K/PI4K catalytic domain in the interval 770–1049; the sequence is ATKKERIRKT…FLIGKSLGSI (280 aa). A G-loop region spans residues 776–782; it reads IRKTSEY. The catalytic loop stretch occupies residues 915–923; sequence QVKDRHNGN. Positions 934–958 are activation loop; that stretch reads HIDFGFMLSNSPGSVGFEAAPFKLT.

Belongs to the PI3/PI4-kinase family. Type III PI4K subfamily. In terms of assembly, interacts with FRQ1.

The protein localises to the nucleus. It is found in the golgi apparatus. Its subcellular location is the trans-Golgi network. The enzyme catalyses a 1,2-diacyl-sn-glycero-3-phospho-(1D-myo-inositol) + ATP = a 1,2-diacyl-sn-glycero-3-phospho-(1D-myo-inositol 4-phosphate) + ADP + H(+). Functionally, acts on phosphatidylinositol (PI) in the first committed step in the production of the second messenger inositol 1,4,5,-trisphosphate. PIK1 is part of a nuclear phosphoinositide cycle and could control cytokinesis through the actin cytoskeleton. Involved in the response to mating pheromone. This is Phosphatidylinositol 4-kinase PIK1 from Saccharomyces cerevisiae (strain ATCC 204508 / S288c) (Baker's yeast).